We begin with the raw amino-acid sequence, 430 residues long: Putative O-antigen transporter (430 aa).

12 helical membrane passes run 23–39, 45–61, 96–112, 131–147, 163–179, 192–208, 236–252, 266–282, 309–325, 342–358, 373–389, and 400–416; these read IIIA…LISM, YAIF…CSAV, IAII…SGVI, LFFT…IGAI, LLNA…LLYI, LIVL…CYIV, LFTL…YMVI, VTMK…TAIL, ILLG…FIYL, VSIL…CIRV, LKIL…IGGI, and ISGV…LTVF.

The protein resides in the cell inner membrane. The protein operates within bacterial outer membrane biogenesis; LPS O-antigen biosynthesis. In terms of biological role, may be involved in the translocation process of the nascent O-polysaccharide molecules and/or its ligation to lipid A core units. The polypeptide is Putative O-antigen transporter (rfbX) (Salmonella typhimurium (strain LT2 / SGSC1412 / ATCC 700720)).